Reading from the N-terminus, the 266-residue chain is Glucosamine-6-phosphate deaminase (266 aa).

Aspartate 72 acts as the Proton acceptor; for enolization step in catalysis. Aspartate 141 functions as the For ring-opening step in the catalytic mechanism. The active-site Proton acceptor; for ring-opening step is the histidine 143. The active-site For ring-opening step is the glutamate 148.

Belongs to the glucosamine/galactosamine-6-phosphate isomerase family. NagB subfamily. Homohexamer.

The enzyme catalyses alpha-D-glucosamine 6-phosphate + H2O = beta-D-fructose 6-phosphate + NH4(+). The protein operates within amino-sugar metabolism; N-acetylneuraminate degradation; D-fructose 6-phosphate from N-acetylneuraminate: step 5/5. Its activity is regulated as follows. Allosterically activated by N-acetylglucosamine 6-phosphate (GlcNAc6P). Functionally, catalyzes the reversible isomerization-deamination of glucosamine 6-phosphate (GlcN6P) to form fructose 6-phosphate (Fru6P) and ammonium ion. The polypeptide is Glucosamine-6-phosphate deaminase (Aeromonas hydrophila subsp. hydrophila (strain ATCC 7966 / DSM 30187 / BCRC 13018 / CCUG 14551 / JCM 1027 / KCTC 2358 / NCIMB 9240 / NCTC 8049)).